The chain runs to 508 residues: GMP synthase [glutamine-hydrolyzing] (508 aa).

In terms of domain architecture, Glutamine amidotransferase type-1 spans 1-189 (MILVLDFGSQ…ALLVCGCEKT (189 aa)). Cys-78 (nucleophile) is an active-site residue. Catalysis depends on residues His-163 and Glu-165. The region spanning 190 to 383 (WGMQHFAQRE…LGVSQDFLMR (194 aa)) is the GMPS ATP-PPase domain. 217–223 (SGGVDST) contacts ATP.

As to quaternary structure, homodimer.

It catalyses the reaction XMP + L-glutamine + ATP + H2O = GMP + L-glutamate + AMP + diphosphate + 2 H(+). Its pathway is purine metabolism; GMP biosynthesis; GMP from XMP (L-Gln route): step 1/1. In terms of biological role, catalyzes the synthesis of GMP from XMP. This is GMP synthase [glutamine-hydrolyzing] (guaA) from Helicobacter pylori (strain ATCC 700392 / 26695) (Campylobacter pylori).